Here is a 169-residue protein sequence, read N- to C-terminus: Ribosome maturation factor RimM (169 aa).

In terms of domain architecture, PRC barrel spans 97-169 (EDEVYFKDLI…KIVVDWEYDY (73 aa)).

This sequence belongs to the RimM family. Binds ribosomal protein uS19.

It localises to the cytoplasm. Its function is as follows. An accessory protein needed during the final step in the assembly of 30S ribosomal subunit, possibly for assembly of the head region. Essential for efficient processing of 16S rRNA. May be needed both before and after RbfA during the maturation of 16S rRNA. It has affinity for free ribosomal 30S subunits but not for 70S ribosomes. The chain is Ribosome maturation factor RimM from Francisella tularensis subsp. tularensis (strain FSC 198).